We begin with the raw amino-acid sequence, 228 residues long: ATP synthase subunit a (228 aa).

The next 6 helical transmembrane spans lie at 19 to 39, 81 to 101, 107 to 127, 136 to 156, 178 to 198, and 204 to 224; these read AIYI…AVAV, LIAT…IPGF, SLNL…FEGI, FAGF…IEVI, LFLL…PYAL, and ILQA…AVVV.

It belongs to the ATPase A chain family. In terms of assembly, F-type ATPases have 2 components, CF(1) - the catalytic core - and CF(0) - the membrane proton channel. CF(1) has five subunits: alpha(3), beta(3), gamma(1), delta(1), epsilon(1). CF(0) has three main subunits: a(1), b(2) and c(9-12). The alpha and beta chains form an alternating ring which encloses part of the gamma chain. CF(1) is attached to CF(0) by a central stalk formed by the gamma and epsilon chains, while a peripheral stalk is formed by the delta and b chains.

It is found in the cell inner membrane. Key component of the proton channel; it plays a direct role in the translocation of protons across the membrane. The chain is ATP synthase subunit a from Campylobacter hominis (strain ATCC BAA-381 / DSM 21671 / CCUG 45161 / LMG 19568 / NCTC 13146 / CH001A).